The primary structure comprises 257 residues: MLLVVDVGNTNTVFGIFENGNKIPLFHKRTVTRKDRTSDELGLFFRGFLREFKIENEMITGGIYSSVVPTLNPILDRMFQDWFKIEAIRVHYQMKLPFSISYPRPYEIGADRLVNAATCAIDFPGKSIIIDLGTATTFCVVNEKPEYLGGVIAPGLKVSMDALTRNTSQLPPIVFQSPGKILGDSTIESIQAGFFFGWIGLLEGIIREIKKDKGQDYQVIGTGGLVTVIDAAHPGIFDKIDPLLTLRGLQILHLMNS.

Residue 6–13 coordinates ATP; it reads DVGNTNTV. Residues Tyr-102 and 109-112 each bind substrate; that span reads GADR. Catalysis depends on Asp-111, which acts as the Proton acceptor. Position 131 (Asp-131) interacts with K(+). ATP is bound at residue Thr-134. Thr-186 serves as a coordination point for substrate.

Belongs to the type III pantothenate kinase family. In terms of assembly, homodimer. NH4(+) is required as a cofactor. It depends on K(+) as a cofactor.

The protein localises to the cytoplasm. The catalysed reaction is (R)-pantothenate + ATP = (R)-4'-phosphopantothenate + ADP + H(+). It functions in the pathway cofactor biosynthesis; coenzyme A biosynthesis; CoA from (R)-pantothenate: step 1/5. Functionally, catalyzes the phosphorylation of pantothenate (Pan), the first step in CoA biosynthesis. The polypeptide is Type III pantothenate kinase (Leptospira interrogans serogroup Icterohaemorrhagiae serovar copenhageni (strain Fiocruz L1-130)).